A 950-amino-acid chain; its full sequence is Protocadherin alpha-1 (950 aa).

The signal sequence occupies residues 1–29; it reads MVFSRRGGLGARDLLLWLLLLAAWEVGSG. 6 Cadherin domains span residues 30-133, 157-242, 243-350, 351-455, 456-565, and 588-678; these read QLHY…PPVF, AADA…APLF, DQAV…APEL, AVTS…APAF, AQPE…APAL, and GHVV…APKA. Residues 30-697 lie on the Extracellular side of the membrane; that stretch reads QLHYSIPEEA…GPEAALVDVN (668 aa). Residues Asn257 and Asn265 are each glycosylated (N-linked (GlcNAc...) asparagine). A glycan (N-linked (GlcNAc...) asparagine) is linked at Asn548. A helical transmembrane segment spans residues 698–718; that stretch reads VYLIIAICAVSSLLVLTLLLY. Topologically, residues 719–950 are cytoplasmic; it reads TALRCSVPPT…GNSTTDNSDQ (232 aa). PXXP repeat units lie at residues 734–737, 799–802, 832–835, 873–876, and 891–894; these read PGKP, PRQP, PGGP, PGNP, and PGSP. Residues 734-894 are 5 X 4 AA repeats of P-X-X-P; sequence PGKPTLVCSS…PDKFIIPGSP (161 aa). 3 disordered regions span residues 752–808, 828–856, and 871–890; these read QQRR…DWRY, LRAG…EVSP, and YGPG…KFII. The disordered stretch occupies residues 900-950; it reads RQEPTNSQIDKSDFITFGKKEETKKKKKKKKGNKTQEKKEKGNSTTDNSDQ. Over residues 909–923 the composition is skewed to basic and acidic residues; the sequence is DKSDFITFGKKEETK.

The protein resides in the cell membrane. Its subcellular location is the secreted. Functionally, potential calcium-dependent cell-adhesion protein. May be involved in the establishment and maintenance of specific neuronal connections in the brain. This Homo sapiens (Human) protein is Protocadherin alpha-1 (PCDHA1).